The primary structure comprises 438 residues: Ribosomal protein uS12 methylthiotransferase RimO (438 aa).

The MTTase N-terminal domain occupies 1-115; the sequence is MKYFILSLGC…LDKLLADLGE (115 aa). 6 residues coordinate [4Fe-4S] cluster: Cys-10, Cys-46, Cys-78, Cys-150, Cys-154, and Cys-157. In terms of domain architecture, Radical SAM core spans 136–366; it reads KSNEVYRYIK…MEVQQEISLN (231 aa). Residues 369–437 enclose the TRAM domain; that stretch reads KALVGKKIPV…IYDLKGEFIN (69 aa).

The protein belongs to the methylthiotransferase family. RimO subfamily. It depends on [4Fe-4S] cluster as a cofactor.

The protein localises to the cytoplasm. The enzyme catalyses L-aspartate(89)-[ribosomal protein uS12]-hydrogen + (sulfur carrier)-SH + AH2 + 2 S-adenosyl-L-methionine = 3-methylsulfanyl-L-aspartate(89)-[ribosomal protein uS12]-hydrogen + (sulfur carrier)-H + 5'-deoxyadenosine + L-methionine + A + S-adenosyl-L-homocysteine + 2 H(+). Catalyzes the methylthiolation of an aspartic acid residue of ribosomal protein uS12. This is Ribosomal protein uS12 methylthiotransferase RimO from Carboxydothermus hydrogenoformans (strain ATCC BAA-161 / DSM 6008 / Z-2901).